The primary structure comprises 199 residues: Probable cobalt-precorrin-6B C(15)-methyltransferase (decarboxylating) (199 aa).

Residues T24, 48–52, D72, and A101 each bind S-adenosyl-L-methionine; that span reads GCGTG.

Belongs to the methyltransferase superfamily. Archaeal-type CbiT family.

The enzyme catalyses Co-precorrin-6B + S-adenosyl-L-methionine = Co-precorrin-7 + S-adenosyl-L-homocysteine + CO2. Its pathway is cofactor biosynthesis; adenosylcobalamin biosynthesis; cob(II)yrinate a,c-diamide from sirohydrochlorin (anaerobic route): step 8/10. Functionally, catalyzes the methylation of C-15 in cobalt-precorrin-6B followed by the decarboxylation of C-12 to form cobalt-precorrin-7. The protein is Probable cobalt-precorrin-6B C(15)-methyltransferase (decarboxylating) of Saccharolobus islandicus (strain L.S.2.15 / Lassen #1) (Sulfolobus islandicus).